The following is a 276-amino-acid chain: Ribonuclease T2 (276 aa).

The first 17 residues, 1 to 17, serve as a signal peptide directing secretion; sequence MGMLALGAMQLAAGAVF. Disulfide bonds link Cys-22-Cys-41, Cys-30-Cys-77, Cys-40-Cys-143, Cys-85-Cys-135, and Cys-208-Cys-242. Residue Asn-32 is glycosylated (N-linked (GlcNAc...) asparagine). His-70 is a catalytic residue. N-linked (GlcNAc...) asparagine glycosylation occurs at Asn-93. Active-site residues include Glu-128 and His-132. Asn-256 is a glycosylation site (N-linked (GlcNAc...) asparagine).

This sequence belongs to the RNase T2 family.

The enzyme catalyses a ribonucleotidyl-ribonucleotide-RNA + H2O = a 3'-end 3'-phospho-ribonucleotide-RNA + a 5'-end dephospho-ribonucleoside-RNA + H(+). In Aspergillus oryzae (strain ATCC 42149 / RIB 40) (Yellow koji mold), this protein is Ribonuclease T2 (rntB).